An 82-amino-acid polypeptide reads, in one-letter code: Small ribosomal subunit protein bS16 (82 aa).

Belongs to the bacterial ribosomal protein bS16 family.

In Aeromonas hydrophila subsp. hydrophila (strain ATCC 7966 / DSM 30187 / BCRC 13018 / CCUG 14551 / JCM 1027 / KCTC 2358 / NCIMB 9240 / NCTC 8049), this protein is Small ribosomal subunit protein bS16.